A 388-amino-acid chain; its full sequence is P2X receptor E (388 aa).

Over 1–28 the chain is Cytoplasmic; sequence MNFRNIDWDSLFSYSTIKIVRIRDKRLG. Residues 29 to 49 form a helical membrane-spanning segment; it reads ILHFAFLIGIILYIIVGTIFL. The Lumenal portion of the chain corresponds to 50–312; the sequence is QKKYLVLESP…QLGQFDFQTM (263 aa). The tract at residues 291-304 is pore-forming motif; the sequence is RHGVRIIFIQTGQL. The helical transmembrane segment at 313-333 threads the bilayer; sequence LLTFVSGIGLVTAASLIVDII. Topologically, residues 334–388 are cytoplasmic; the sequence is ATRIMPQRSRYQELKFQDSSINNTQKTPTNDHTPLLKDNEDTINENSYQNNSYEK. Positions 349–388 are disordered; it reads FQDSSINNTQKTPTNDHTPLLKDNEDTINENSYQNNSYEK. Polar residues-rich tracts occupy residues 350–365 and 377–388; these read QDSS…TNDH and NENSYQNNSYEK.

The protein belongs to the P2X receptor family.

It localises to the contractile vacuole membrane. Functionally, P2X receptors are ATP-gated ion channels that play a role in intracellular calcium signaling. Not required for the purinergic response to extracellular nucleotides. Not essential for osmoregulation. Inward currents evoked by intracellular ATP. ATP analog beta, gamma-imido-ATP is a weak partial agonist of p2xE. Exclusively selective for ATP over other nucleotides. Insensitive to copper and P2 receptor antagonists PPADS and suramin but strongly inhibited by sodium ions. More permeable to ammonium than either sodium or potassium ions and less permeable to choline. Permeable to calcium ions, but not chloride. The polypeptide is P2X receptor E (p2xE) (Dictyostelium discoideum (Social amoeba)).